A 616-amino-acid chain; its full sequence is Dihydroxy-acid dehydratase (616 aa).

Asp-81 provides a ligand contact to Mg(2+). Residue Cys-122 coordinates [2Fe-2S] cluster. The Mg(2+) site is built by Asp-123 and Lys-124. An N6-carboxylysine modification is found at Lys-124. [2Fe-2S] cluster is bound at residue Cys-197. Position 493 (Glu-493) interacts with Mg(2+). Ser-519 serves as the catalytic Proton acceptor.

This sequence belongs to the IlvD/Edd family. Homodimer. It depends on [2Fe-2S] cluster as a cofactor. The cofactor is Mg(2+).

It carries out the reaction (2R)-2,3-dihydroxy-3-methylbutanoate = 3-methyl-2-oxobutanoate + H2O. It catalyses the reaction (2R,3R)-2,3-dihydroxy-3-methylpentanoate = (S)-3-methyl-2-oxopentanoate + H2O. It participates in amino-acid biosynthesis; L-isoleucine biosynthesis; L-isoleucine from 2-oxobutanoate: step 3/4. The protein operates within amino-acid biosynthesis; L-valine biosynthesis; L-valine from pyruvate: step 3/4. In terms of biological role, functions in the biosynthesis of branched-chain amino acids. Catalyzes the dehydration of (2R,3R)-2,3-dihydroxy-3-methylpentanoate (2,3-dihydroxy-3-methylvalerate) into 2-oxo-3-methylpentanoate (2-oxo-3-methylvalerate) and of (2R)-2,3-dihydroxy-3-methylbutanoate (2,3-dihydroxyisovalerate) into 2-oxo-3-methylbutanoate (2-oxoisovalerate), the penultimate precursor to L-isoleucine and L-valine, respectively. The polypeptide is Dihydroxy-acid dehydratase (Corynebacterium kroppenstedtii (strain DSM 44385 / JCM 11950 / CIP 105744 / CCUG 35717)).